Reading from the N-terminus, the 379-residue chain is UDP-4-amino-4-deoxy-L-arabinose--oxoglutarate aminotransferase (379 aa).

The residue at position 182 (K182) is an N6-(pyridoxal phosphate)lysine.

Belongs to the DegT/DnrJ/EryC1 family. ArnB subfamily. In terms of assembly, homodimer. It depends on pyridoxal 5'-phosphate as a cofactor.

It catalyses the reaction UDP-4-amino-4-deoxy-beta-L-arabinose + 2-oxoglutarate = UDP-beta-L-threo-pentopyranos-4-ulose + L-glutamate. Its pathway is nucleotide-sugar biosynthesis; UDP-4-deoxy-4-formamido-beta-L-arabinose biosynthesis; UDP-4-deoxy-4-formamido-beta-L-arabinose from UDP-alpha-D-glucuronate: step 2/3. It participates in bacterial outer membrane biogenesis; lipopolysaccharide biosynthesis. Catalyzes the conversion of UDP-4-keto-arabinose (UDP-Ara4O) to UDP-4-amino-4-deoxy-L-arabinose (UDP-L-Ara4N). The modified arabinose is attached to lipid A and is required for resistance to polymyxin and cationic antimicrobial peptides. This Salmonella paratyphi A (strain ATCC 9150 / SARB42) protein is UDP-4-amino-4-deoxy-L-arabinose--oxoglutarate aminotransferase.